We begin with the raw amino-acid sequence, 724 residues long: Disks large homolog 4 (724 aa).

2 S-palmitoyl cysteine lipidation sites follow: Cys3 and Cys5. Positions 15–35 are disordered; sequence QDEDTPPLEHSPAHLPNQANS. 2 PDZ domains span residues 65–151 and 160–246; these read EITL…VMRR and EIKL…VAKP. A phosphoserine mark is found at Ser73 and Ser142. The residue at position 240 (Tyr240) is a Phosphotyrosine. A Phosphoserine modification is found at Ser295. The PDZ 3 domain maps to 313–393; it reads RIVIHRGSTG…QTVTIIAQYK (81 aa). Residues Ser415 and Ser418 each carry the phosphoserine modification. Thr420 is modified (phosphothreonine). Residues Ser422, Ser425, Ser449, and Ser480 each carry the phosphoserine modification. Positions 428 to 498 constitute an SH3 domain; that stretch reads KRGFYIRALF…PSKRRVERRE (71 aa). Residues 534–709 form the Guanylate kinase-like domain; it reads ARPIIILGPT…IYHKVKRVIE (176 aa). A Phosphotyrosine modification is found at Tyr580. Phosphoserine occurs at positions 606 and 654. Tyr715 is subject to Phosphotyrosine.

The protein belongs to the MAGUK family. In terms of assembly, interacts through its PDZ domains with ANO2 and NETO1. Interacts through its first two PDZ domains with GRIN2A, GRIN2B, GRIN2C, GRIN2D. Interacts with ASIC3. Interacts with SEMA4C. Interacts with CXADR. Interacts with KCND2. Interacts with SYNGAP1. Interacts with LRRC4 and LRRC4B. Interacts with ERBB4. Interacts with KCNA1, KCNA2, KCNA3 and KCNA4. Interacts through its first PDZ domain with GRIK2, KCNA4 and CRIPT. Interacts through its second PDZ domain with the PDZ domain of NOS1 or the C-terminus of CAPON. Interacts through its third PDZ domain with NLGN1 and CRIPT, and probably with NLGN2 and NLGN3. Interacts through its guanylate kinase-like domain with KIF13B. Interacts through its guanylate kinase-like domain with DLGAP1/GKAP, DLGAP2, DLGAP3, DLGAP4, MAP1A, BEGAIN and SIPA1L1. Isoform 2 interacts through an L27 domain with HGS/HRS and the first L27 domain of CASK. Interacts with ADR1B and ANKS1B. May interact with HTR2A. Interacts with ADAM22. Interacts with KLHL17 and LGI1. Interacts with FRMPD4 (via C-terminus). Interacts with LRFN1, LRFN2 and LRFN4. Interacts (via N-terminal tandem pair of PDZ domains) with GPER1 (via C-terminus tail motif); the interaction is direct and induces the increase of GPER1 protein levels residing at the plasma membrane surface in a estradiol-independent manner. Interacts (via N-terminus tandem pair of PDZ domains) with NOS1 (via N-terminal domain). Interacts with SHANK3. Interacts with KCNJ4. Interacts with GPR85. Interacts with CACNG2 and MPP2 (via the SH3-Guanylate kinase-like sub-module). Interacts with ADGRB1. Found in a complex with PRR7 and GRIN1. Interacts (via PDZ3 domain and to lesser degree via PDZ2 domain) with PRR7. Component of the postsynaptic hippocampal AMPA-type glutamate receptor (AMPAR) complex, at least composed of pore forming AMPAR subunits GRIA1, GRIA2 and GRIA3 and AMPAR auxiliary proteins SHISA6 and SHISA7. Interacts (via its first two PDZ domains) with SHISA6 and SHISA7 (via PDZ-binding motif); the interaction is direct. Interacts with RPH3A and GRIN2A; this ternary complex regulates NMDA receptor composition at postsynaptic membranes. Interacts with ABR and BCR. Interacts with DGKI (via PDZ-binding motif); controls the localization of DGKI to the synapse. Interacts with C9orf72, SMCR8 and RAB39B. Interacts with ZDHHC5. Interacts with PTEN (via PDZ domain-binding motif); the interaction is induced by NMDA and is required for PTEN location at postsynaptic density. Found in a complex with GRIA1, GRIA2, GRIA3, GRIA4, CACNG8 and CNIH2. Interacts with FAM81A; the interaction facilitates condensate formation via liquid-liquid phase separation. Interacts with ADGRL3. Interacts with SORCS3. In terms of processing, palmitoylated. Palmitoylation is required for targeting to postsynaptic density, plasma membrane and synapses. Palmitoylation by ZDHHC2 occurs when the synaptic activity decreases and induces DLG4 synaptic clustering. Palmitoylation by ZDHHC15 regulates trafficking to the postsynaptic density and function in synaptogenesis. Palmitoylation may play a role in glutamate receptor GRIA1 synapse clustering. Depalmitoylated by ABHD17A and ABHD17B and to a lesser extent by ABHD17C, ABHD12, ABHD13, LYPLA1 and LYPLA2. Undergoes rapid synaptic palmitoylation/depalmitoylation cycles during neuronal development which slow down in mature neurons. Post-translationally, ubiquitinated by MDM2 in response to NMDA receptor activation, leading to proteasome-mediated degradation of DLG4 which is required for AMPA receptor endocytosis. As to expression, brain.

The protein resides in the cell membrane. It localises to the postsynaptic density. The protein localises to the synapse. It is found in the cytoplasm. Its subcellular location is the cell projection. The protein resides in the axon. It localises to the dendritic spine. The protein localises to the dendrite. It is found in the presynapse. Postsynaptic scaffolding protein that plays a critical role in synaptogenesis and synaptic plasticity by providing a platform for the postsynaptic clustering of crucial synaptic proteins. Interacts with the cytoplasmic tail of NMDA receptor subunits and shaker-type potassium channels. Required for synaptic plasticity associated with NMDA receptor signaling. Overexpression or depletion of DLG4 changes the ratio of excitatory to inhibitory synapses in hippocampal neurons. May reduce the amplitude of ASIC3 acid-evoked currents by retaining the channel intracellularly. May regulate the intracellular trafficking of ADR1B. Also regulates AMPA-type glutamate receptor (AMPAR) immobilization at postsynaptic density keeping the channels in an activated state in the presence of glutamate and preventing synaptic depression. Under basal conditions, cooperates with FYN to stabilize palmitoyltransferase ZDHHC5 at the synaptic membrane through FYN-mediated phosphorylation of ZDHHC5 and its subsequent inhibition of association with endocytic proteins. In Homo sapiens (Human), this protein is Disks large homolog 4.